A 375-amino-acid chain; its full sequence is Chaperone protein DnaJ (375 aa).

A J domain is found at 5–70 (DYYEVLGVNR…RKRASYDQFG (66 aa)). The segment at 133 to 211 (GLSRTIKVPT…CHGQGRQQQT (79 aa)) adopts a CR-type zinc-finger fold. Residues C146, C149, C163, C166, C185, C188, C199, and C202 each coordinate Zn(2+). CXXCXGXG motif repeat units follow at residues 146 to 153 (CKTCNGSG), 163 to 170 (CPRCNGSG), 185 to 192 (CSVCRGRG), and 199 to 206 (CTDCHGQG).

The protein belongs to the DnaJ family. Homodimer. The cofactor is Zn(2+).

The protein localises to the cytoplasm. Participates actively in the response to hyperosmotic and heat shock by preventing the aggregation of stress-denatured proteins and by disaggregating proteins, also in an autonomous, DnaK-independent fashion. Unfolded proteins bind initially to DnaJ; upon interaction with the DnaJ-bound protein, DnaK hydrolyzes its bound ATP, resulting in the formation of a stable complex. GrpE releases ADP from DnaK; ATP binding to DnaK triggers the release of the substrate protein, thus completing the reaction cycle. Several rounds of ATP-dependent interactions between DnaJ, DnaK and GrpE are required for fully efficient folding. Also involved, together with DnaK and GrpE, in the DNA replication of plasmids through activation of initiation proteins. The chain is Chaperone protein DnaJ from Coxiella burnetii (strain CbuK_Q154) (Coxiella burnetii (strain Q154)).